Reading from the N-terminus, the 158-residue chain is 2-C-methyl-D-erythritol 2,4-cyclodiphosphate synthase (158 aa).

2 residues coordinate a divalent metal cation: Asp-9 and His-11. Residues 9–11 (DVH) and 35–36 (HS) contribute to the 4-CDP-2-C-methyl-D-erythritol 2-phosphate site. His-43 is a binding site for a divalent metal cation. Residues 57 to 59 (DIG), 62 to 66 (FPDTD), 101 to 107 (AQAPKMA), 133 to 136 (TTTE), Phe-140, and Arg-143 each bind 4-CDP-2-C-methyl-D-erythritol 2-phosphate.

The protein belongs to the IspF family. Homotrimer. The cofactor is a divalent metal cation.

The enzyme catalyses 4-CDP-2-C-methyl-D-erythritol 2-phosphate = 2-C-methyl-D-erythritol 2,4-cyclic diphosphate + CMP. It functions in the pathway isoprenoid biosynthesis; isopentenyl diphosphate biosynthesis via DXP pathway; isopentenyl diphosphate from 1-deoxy-D-xylulose 5-phosphate: step 4/6. In terms of biological role, involved in the biosynthesis of isopentenyl diphosphate (IPP) and dimethylallyl diphosphate (DMAPP), two major building blocks of isoprenoid compounds. Catalyzes the conversion of 4-diphosphocytidyl-2-C-methyl-D-erythritol 2-phosphate (CDP-ME2P) to 2-C-methyl-D-erythritol 2,4-cyclodiphosphate (ME-CPP) with a corresponding release of cytidine 5-monophosphate (CMP). This chain is 2-C-methyl-D-erythritol 2,4-cyclodiphosphate synthase, found in Vibrio vulnificus (strain YJ016).